The following is a 252-amino-acid chain: 2-succinyl-6-hydroxy-2,4-cyclohexadiene-1-carboxylate synthase (252 aa).

The protein belongs to the AB hydrolase superfamily. MenH family. Monomer.

The enzyme catalyses 5-enolpyruvoyl-6-hydroxy-2-succinyl-cyclohex-3-ene-1-carboxylate = (1R,6R)-6-hydroxy-2-succinyl-cyclohexa-2,4-diene-1-carboxylate + pyruvate. Its pathway is quinol/quinone metabolism; 1,4-dihydroxy-2-naphthoate biosynthesis; 1,4-dihydroxy-2-naphthoate from chorismate: step 3/7. It functions in the pathway quinol/quinone metabolism; menaquinone biosynthesis. In terms of biological role, catalyzes a proton abstraction reaction that results in 2,5-elimination of pyruvate from 2-succinyl-5-enolpyruvyl-6-hydroxy-3-cyclohexene-1-carboxylate (SEPHCHC) and the formation of 2-succinyl-6-hydroxy-2,4-cyclohexadiene-1-carboxylate (SHCHC). This is 2-succinyl-6-hydroxy-2,4-cyclohexadiene-1-carboxylate synthase from Salmonella schwarzengrund (strain CVM19633).